We begin with the raw amino-acid sequence, 469 residues long: Transcription factor phomD' (469 aa).

The zn(2)-C6 fungal-type DNA-binding region spans 14–41 (CNACNESKVRCSQRKPTCARCERNGVEC). The segment at 49 to 118 (THKDAPPISM…QQKDEAAAAA (70 aa)) is disordered. Polar residues predominate over residues 82–93 (KANSNSSSNWHM). The segment covering 104–118 (QQQQQQQKDEAAAAA) has biased composition (low complexity).

The protein localises to the nucleus. Its function is as follows. Transcription factor; part of the gene cluster that mediates the biosynthesis of the phomopsins, a group of hexapeptide mycotoxins which infects lupins and causes lupinosis disease in livestock. May play a role in the regulation of the production of phomopsins. The sequence is that of Transcription factor phomD' from Diaporthe leptostromiformis (Lupinosis disease fungus).